A 483-amino-acid chain; its full sequence is Altronate oxidoreductase (483 aa).

Isoleucine 18–alanine 29 contacts NAD(+).

It belongs to the mannitol dehydrogenase family. UxaB subfamily.

It catalyses the reaction D-altronate + NAD(+) = keto-D-tagaturonate + NADH + H(+). It functions in the pathway carbohydrate metabolism; pentose and glucuronate interconversion. The polypeptide is Altronate oxidoreductase (Escherichia coli O6:K15:H31 (strain 536 / UPEC)).